A 743-amino-acid polypeptide reads, in one-letter code: MSFSNKEQGKQQPALLPSAKAIDALVRAEHRDPFAILGPHGDGAGGQFIRAFLPGALSVQVLDRDQQQVLGSLQAGEVPGLFVGHFPEARPYLLRIQWAGGEQVSEDPYSFGPLLGEMDLYLFAEGNHRDLSSCLGAQLTTVDGIDGVRFAVWAPNARRVSVVGDFNIWDGRRHPMRLRHPSGVWELFIPRLQAGEAYKYEILGPQGILPLKADPMALATQLPPDTASRVAPPLTIDWQDQEWMLARGERQRVDAPLSIYELHAGSWQCEVDDLGEVARQYSWAELAERLIPYVKDLGFTHIELMPIMEHPFGGSWGYQPLSQFAPSARYGSPQDFAAFIDACHQAGIGVILDWVPAHFPTDTHGLAQFDGTALYEYGNPLEGFHQDWDTLIYNLGRTEVHGFMLASALHWLKHFHVDGLRVDAVASMLYRDYSRKAGEWVPNRHGGRENLEAIDFLRHLNDVVALEAPGALVIAEESTAWPGVSQRTDQGGLGFAYKWNMGWMHDSLHYIQQDPVYRAHHHNELSFGLVYAWSERFILPISHDEVVHGKHSLIDKMPGDRWQKFANLRAYLSFMWAHPGKKLLFMGCEFGQWREWNHDQQLDWYLLQYPEHRGVQQLVGDLNRLYRQYPPLHDQDDVPQGFQWLIGDDAINSVYAWLRWSKSGEPLLVVANFTPVPRQGYRVGVPVAGRWSELLNSDSQLYAGSNYGNGGEAFSEEQSSHGQALSLVLNLPPLAVLILRPDS.

Catalysis depends on Asp-423, which acts as the Nucleophile. The active-site Proton donor is Glu-476.

It belongs to the glycosyl hydrolase 13 family. GlgB subfamily. Monomer.

The enzyme catalyses Transfers a segment of a (1-&gt;4)-alpha-D-glucan chain to a primary hydroxy group in a similar glucan chain.. It functions in the pathway glycan biosynthesis; glycogen biosynthesis. In terms of biological role, catalyzes the formation of the alpha-1,6-glucosidic linkages in glycogen by scission of a 1,4-alpha-linked oligosaccharide from growing alpha-1,4-glucan chains and the subsequent attachment of the oligosaccharide to the alpha-1,6 position. The sequence is that of 1,4-alpha-glucan branching enzyme GlgB from Pseudomonas fluorescens (strain ATCC BAA-477 / NRRL B-23932 / Pf-5).